The chain runs to 625 residues: ATP-dependent RNA helicase mrh4, mitochondrial (625 aa).

A mitochondrion-targeting transit peptide spans Met-1–Ala-16. Residues Thr-19–Ser-28 show a composition bias toward low complexity. The segment at Thr-19–Leu-119 is disordered. Positions Asp-90 to Thr-113 are enriched in basic and acidic residues. The Q motif motif lies at Gln-144–Arg-177. Residues Pro-195–Ile-406 enclose the Helicase ATP-binding domain. ATP is bound at residue Ala-208–Thr-215. The DEAD box signature appears at Asp-353–Asp-356. Residues Glu-453 to Val-625 enclose the Helicase C-terminal domain.

It belongs to the DEAD box helicase family. MRH4 subfamily.

The protein resides in the mitochondrion. The enzyme catalyses ATP + H2O = ADP + phosphate + H(+). ATP-binding RNA helicase involved in mitochondrial RNA metabolism. Required for maintenance of mitochondrial DNA. The sequence is that of ATP-dependent RNA helicase mrh4, mitochondrial (drh-15) from Neurospora crassa (strain ATCC 24698 / 74-OR23-1A / CBS 708.71 / DSM 1257 / FGSC 987).